A 199-amino-acid chain; its full sequence is Single-stranded DNA-binding protein 2 (199 aa).

Positions 1 to 110 constitute an SSB domain; the sequence is MAGETVITVV…LDVDEVGASL (110 aa). Positions 114-199 are disordered; it reads TAKVTKTSGQ…GGGYSDEPPF (86 aa). The span at 123-156 shows a compositional bias: gly residues; it reads QGRGGQGGYGGGGGGQGGGGWGGGPGGGQQGGGA. The span at 157–166 shows a compositional bias: low complexity; that stretch reads PADDPWATGG. A compositionally biased stretch (gly residues) spans 167-193; that stretch reads APAGGQQGGGGQGGGGWGGGSGGGGGY.

As to quaternary structure, homotetramer. Post-translationally, phosphorylated on tyrosine residue(s) when expressed in E.coli.

It localises to the cytoplasm. It is found in the nucleoid. This chain is Single-stranded DNA-binding protein 2 (ssb2), found in Streptomyces coelicolor (strain ATCC BAA-471 / A3(2) / M145).